The chain runs to 102 residues: MPTKARIRLWSSNIDSLNFVVNQIRNMAQKTGIQVSGPIPLPTTRMEVPVMRLPHGEGKKKWEHWEMKVHKRIIDIAADERVMRQLMRVRVPDDVYIEIELI.

This sequence belongs to the universal ribosomal protein uS10 family. As to quaternary structure, part of the 30S ribosomal subunit.

Functionally, involved in the binding of tRNA to the ribosomes. This is Small ribosomal subunit protein uS10 from Sulfolobus acidocaldarius (strain ATCC 33909 / DSM 639 / JCM 8929 / NBRC 15157 / NCIMB 11770).